A 448-amino-acid chain; its full sequence is Phosphoglucosamine mutase (448 aa).

Catalysis depends on Ser-100, which acts as the Phosphoserine intermediate. Positions 100, 240, 242, and 244 each coordinate Mg(2+). Ser-100 is subject to Phosphoserine.

Belongs to the phosphohexose mutase family. Mg(2+) is required as a cofactor. Post-translationally, activated by phosphorylation.

The enzyme catalyses alpha-D-glucosamine 1-phosphate = D-glucosamine 6-phosphate. Catalyzes the conversion of glucosamine-6-phosphate to glucosamine-1-phosphate. This Clostridioides difficile (strain 630) (Peptoclostridium difficile) protein is Phosphoglucosamine mutase.